A 292-amino-acid chain; its full sequence is Potassium channel, subfamily K, member 16 (292 aa).

Residues 1 to 13 (MPRAGVCGCWGGQ) are Cytoplasmic-facing. A helical transmembrane segment spans residues 14–34 (VLPLLLAYICYLLLGATIFQL). Positions 98 to 116 (SFFFAGTVVTTIGYGNLAP) form an intramembrane region, pore-forming. K(+) contacts are provided by Thr108, Ile109, Gly110, and Tyr111. The tract at residues 108–113 (TIGYGN) is selectivity filter 1. The chain crosses the membrane as a helical span at residues 120 to 140 (AGQVFCVFYALMGIPLNVVFL). Topologically, residues 141-165 (NHLGTGLRAHLTTLDRWEDHPRHSQ) are cytoplasmic. A helical transmembrane segment spans residues 166–186 (LLQVLGLALFLTLGTLVILIF). The pore-forming intramembrane region spans 202-221 (GFYFAFITLSTIGFGDYVVG). K(+)-binding residues include Thr212, Ile213, Gly214, and Phe215. The interval 212–217 (TIGFGD) is selectivity filter 2. Residues 238–258 (IWILLGLAWLAVVLSLGSLLL) traverse the membrane as a helical segment. Residues 259 to 292 (HRCSRLWQLIRGLDLKDGAAPDSEPRSQKIPISA) are Cytoplasmic-facing.

This sequence belongs to the two pore domain potassium channel (TC 1.A.1.8) family. Homodimer; disulfide-linked. Heterodimer with KCNK17 and KCNK5. In terms of tissue distribution, expressed in pacreatic beta-cells (at protein level). Expressed in pacreatic delta-cells (at protein level).

It localises to the cell membrane. Its subcellular location is the endoplasmic reticulum membrane. It is found in the mitochondrion inner membrane. It catalyses the reaction K(+)(in) = K(+)(out). The enzyme catalyses Rb(+)(in) = Rb(+)(out). It carries out the reaction Cs(+)(in) = Cs(+)(out). Functionally, k(+) channel that conducts voltage-dependent outward rectifying currents upon membrane depolarization. Voltage sensing is coupled to K(+) electrochemical gradient in an 'ion flux gating' mode where outward but not inward ion flow opens the gate. Homo- and heterodimerizes to form functional channels with distinct regulatory and gating properties. In pancreatic islets, conducts K(+) countercurrents for Ca(2+) release from the endoplasmic reticulum (ER) and regulates the frequency and duration of cytosolic Ca(2+) oscillations coupled to secretion of pancreatic hormones. In pancreatic beta cells, drives ER Ca(2+) efflux, which in turn activates Ca(2+)-dependent plasma membrane K(+) slow currents and cytosolic Ca(2+) influx, overall contributing to synchronous cytosolic Ca(2+) oscillations. Limits glucose-induced cytosolic Ca(2+) oscillations coupled to second-phase INS secretion. Contributes to beta cell adaptation to acute inflammation by maintaining normal cytosolic Ca(2+) levels and INS secretion. May regulate beta cell mitochondrial Ca(2+) levels either indirectly via ER Ca(2+) efflux or directly by hyperpolarizing the mitochondrial membrane potential. Limits mitochondrial Ca(2+) oscillations and ATP production involved in glucose homeostasis upon metabolic stress. In pancreatic delta cells, limits Ca(2+)-induced Ca(2+)-release involved in somatostatin secretion and modulates islet paracrine signaling involved in glucagon secretion. Permeable to other monovalent cations such as Rb(+) and Cs(+). The chain is Potassium channel, subfamily K, member 16 from Mus musculus (Mouse).